The sequence spans 492 residues: Chitooligosaccharide oxidase (492 aa).

Positions 1-19 (MHFNTLTCVLVGLVAHTSA) are cleaved as a signal peptide. Residues 57-229 (LPFEPAAIAV…VELEFQTFAA (173 aa)) form the FAD-binding PCMH-type domain. Positions 94–154 (HSYTSLGFGG…GKRALAHGTC (61 aa)) form a cross-link, 6-(S-cysteinyl)-8alpha-(pros-histidyl)-FAD (His-Cys).

It belongs to the oxygen-dependent FAD-linked oxidoreductase family. It depends on FAD as a cofactor. In terms of processing, the FAD cofactor is bound via a bicovalent 6-S-cysteinyl, 8alpha-N1-histidyl FAD linkage.

The protein resides in the secreted. It carries out the reaction N,N'-diacetylchitobiose + O2 = N,N'-diacetylchitobiono-1,5-lactone + H2O2. The catalysed reaction is N,N',N''-triacetylchitotriose + O2 = N,N',N''-triacetylchitotriono-1,5-lactone + H2O2. It catalyses the reaction N,N',N'',N'''-tetraacetylchitotetraose + O2 = N,N',N'',N'''-tetraacetylchitotetraono-1,5-lactone + H2O2. Its function is as follows. Catalyzes the selective oxidation of C1 hydroxyl moieties on chitooligosaccharides with concomitant reduction of molecular oxygen to hydrogen peroxide. This results in the formation of the corresponding lactones, which typically undergo spontaneous hydrolysis. Chitooligosaccharides are homo- or heterooligomers of N-acetylglucosamine (GlcNAc) and D-glucosamine which are linked through beta-1,4-glycosidic bonds. For optimal substrate binding at least 2 GlcNAc units are needed, and chitooligosaccharide oxidase is most efficient on chitobiose, chitotriose and chitotetraose. In Gibberella zeae (strain ATCC MYA-4620 / CBS 123657 / FGSC 9075 / NRRL 31084 / PH-1) (Wheat head blight fungus), this protein is Chitooligosaccharide oxidase.